The sequence spans 167 residues: RNA pyrophosphohydrolase (167 aa).

Positions 7–160 (PYRPCVGVMV…KRRAYEEVVA (154 aa)) constitute a Nudix hydrolase domain. A Nudix box motif is present at residues 48-69 (GGIDEGEDPLEAACRELYEETG).

Belongs to the Nudix hydrolase family. RppH subfamily. Requires a divalent metal cation as cofactor.

Its function is as follows. Accelerates the degradation of transcripts by removing pyrophosphate from the 5'-end of triphosphorylated RNA, leading to a more labile monophosphorylated state that can stimulate subsequent ribonuclease cleavage. The protein is RNA pyrophosphohydrolase of Rhizobium meliloti (strain 1021) (Ensifer meliloti).